Here is a 137-residue protein sequence, read N- to C-terminus: Fatty acid-binding protein homolog 7 (137 aa).

Belongs to the calycin superfamily. Fatty-acid binding protein (FABP) family.

This Caenorhabditis elegans protein is Fatty acid-binding protein homolog 7 (lbp-7).